The primary structure comprises 229 residues: Movement and silencing protein TGBp1 (229 aa).

Residues 1 to 114 (MVEFTKRLLL…PAAQVPHFVK (114 aa)) enclose the (+)RNA virus helicase ATP-binding domain. A (+)RNA virus helicase C-terminal domain is found at 115-229 (LFSHRCGLNS…MSFDAADTSA (115 aa)).

The protein belongs to the Tymovirales TGBp1 protein family. Homodimer and homooligomer. Interacts with capsid protein. Interacts with host AGO1; this interaction targets the host protein for degradation, thereby suppressing the antiviral RNA silencing.

It is found in the host cytoplasm. Transports viral genome to neighboring plant cells directly through plasmosdesmata, without any budding. The movement protein allows efficient cell to cell propagation, by bypassing the host cell wall barrier. Increases plasmodesma size exclusion limit. Acts as a suppressor of RNA-mediated gene silencing, also known as post-transcriptional gene silencing (PTGS), a mechanism of plant viral defense that limits the accumulation of viral RNAs. This Strawberry mild yellow edge-associated virus (SMYEaV) protein is Movement and silencing protein TGBp1.